The sequence spans 311 residues: MGIMAVLMLPLLLLGVSGLLFIYQEASRLWSKSAVQNKVVVITDALSGLGKECARVFNAGGARLVLCGKNWEGLESLYAALTSVADPSKTFTPKLVLLDLSDISCVEDVAKEVLDCYGCVDILINNASVKVKGPAHKISLELDKKIMDANYFGPITFTKVLLPNMISRRTGQIVLVNNIQAKFGIPFRTAYAASKHAVMGFFDCLRAEVEEYDVVVSTVSPTFIRSYQAYPEQRNWGSSICKFFCRKLTYGVHPVEVAEEVMRTVRRKKQEVFMANPVPKAAVFIRTFFPELFFAVVACGVKEKLSVPEEG.

The first 18 residues, 1-18, serve as a signal peptide directing secretion; that stretch reads MGIMAVLMLPLLLLGVSG. The NAD(+) site is built by serine 47, leucine 49, tyrosine 191, lysine 195, and serine 226. Residue tyrosine 191 is the Proton acceptor of the active site.

Belongs to the short-chain dehydrogenases/reductases (SDR) family. As to expression, expressed in skeletal muscle, cardiac muscle and skin.

It is found in the sarcoplasmic reticulum membrane. It carries out the reaction all-trans-retinol + NAD(+) = all-trans-retinal + NADH + H(+). Its function is as follows. NADH-dependent oxidoreductase which catalyzes the oxidation of all-trans-retinol to all-trans-retinal. Plays a role in the regulation of cardiac and skeletal muscle metabolic functions. Maintains Ca(2+) intracellular homeostasis by repressing Ca(2+) release from the sarcoplasmic reticulum (SR) in myotubes, possibly through local alternations in NAD/NADH or retinol/retinal. Also plays a role in Ca(2+) homeostasis by controlling Ca(2+) overload in the cytosol and the SR in myotubes. Involved in glucose uptake into skeletal muscles and muscle performance by activating PI3K and mTORC2-mediated AKT1 phosphorylation signaling pathways, possibly through the action of its downstream catalytic product all-trans-retinoic acid. This is Dehydrogenase/reductase SDR family member 7C from Rattus norvegicus (Rat).